We begin with the raw amino-acid sequence, 252 residues long: Cysteine-rich repeat secretory protein 38 (252 aa).

The N-terminal stretch at 1–27 (MSSLKRIVWFPILAIAIQILSIHTVLS) is a signal peptide. Gnk2-homologous domains lie at 34–136 (FLFH…STNF) and 142–248 (FENR…IYPF).

It belongs to the cysteine-rich repeat secretory protein family.

The protein localises to the secreted. This is Cysteine-rich repeat secretory protein 38 (CRRSP38) from Arabidopsis thaliana (Mouse-ear cress).